Consider the following 71-residue polypeptide: Heat-stable enterotoxin A (71 aa).

Positions 1 to 19 (MKKIVFVLVLMLSSFGAFG) are cleaved as a signal peptide. Positions 20–53 (QETVSGQFSDALSTPITAEVYKQACDPPLPPAEV) are excised as a propeptide. 3 cysteine pairs are disulfide-bonded: Cys59–Cys64, Cys60–Cys68, and Cys63–Cys71.

Belongs to the heat-stable enterotoxin family.

Its subcellular location is the secreted. In terms of biological role, toxin which activates the particulate form of guanylate cyclase and increases cyclic GMP levels within the host intestinal epithelial cells. This is Heat-stable enterotoxin A (ystA) from Yersinia enterocolitica.